Reading from the N-terminus, the 363-residue chain is 3-isopropylmalate dehydrogenase (363 aa).

Residue 78–89 coordinates NAD(+); it reads GPKWGTGAVRPE. Arg-96, Arg-106, Arg-135, and Asp-224 together coordinate substrate. Residues Asp-224, Asp-249, and Asp-253 each coordinate Mg(2+). Residue 288-299 participates in NAD(+) binding; that stretch reads GSAPDLPANKVN.

The protein belongs to the isocitrate and isopropylmalate dehydrogenases family. As to quaternary structure, homodimer. Mg(2+) is required as a cofactor. Mn(2+) serves as cofactor.

It localises to the cytoplasm. It catalyses the reaction (2R,3S)-3-isopropylmalate + NAD(+) = 4-methyl-2-oxopentanoate + CO2 + NADH. It participates in amino-acid biosynthesis; L-leucine biosynthesis; L-leucine from 3-methyl-2-oxobutanoate: step 3/4. Its function is as follows. Catalyzes the oxidation of 3-carboxy-2-hydroxy-4-methylpentanoate (3-isopropylmalate) to 3-carboxy-4-methyl-2-oxopentanoate. The product decarboxylates to 4-methyl-2 oxopentanoate. This chain is 3-isopropylmalate dehydrogenase (LEU2), found in Cyberlindnera jadinii (Torula yeast).